We begin with the raw amino-acid sequence, 237 residues long: MVFFPPLEQGRLLRRYKRFLADIELANGEQLTIHCPNTGSMLNCMREGGQVWFSRSNDPKRKLPGTWEISETPQGRLACVNTGRANALVEEALRAGVIRELAGFTALKREVAYGEEGSRVDFRLEFDHGPAYVEVKSVTLGYPDTAVAAFPDAVTQRGAKHLRELATLARQGIRAVQLYCVNLTGIEAVRPADEIDAAYARALRAAVADGVEVLAYGARLDAELIVIDRPLPVLLNP.

It belongs to the SfsA family.

This chain is Sugar fermentation stimulation protein homolog, found in Pseudomonas putida (strain W619).